A 226-amino-acid chain; its full sequence is Glycerol-3-phosphate acyltransferase (226 aa).

A run of 6 helical transmembrane segments spans residues Met-1–Phe-21, Phe-60–Phe-80, Leu-102–Phe-122, Ile-134–Val-154, Ile-159–Leu-178, and Leu-182–Leu-197.

Belongs to the PlsY family. In terms of assembly, probably interacts with PlsX.

It localises to the cell inner membrane. The enzyme catalyses an acyl phosphate + sn-glycerol 3-phosphate = a 1-acyl-sn-glycero-3-phosphate + phosphate. Its pathway is lipid metabolism; phospholipid metabolism. Functionally, catalyzes the transfer of an acyl group from acyl-phosphate (acyl-PO(4)) to glycerol-3-phosphate (G3P) to form lysophosphatidic acid (LPA). This enzyme utilizes acyl-phosphate as fatty acyl donor, but not acyl-CoA or acyl-ACP. This Nostoc sp. (strain PCC 7120 / SAG 25.82 / UTEX 2576) protein is Glycerol-3-phosphate acyltransferase.